The sequence spans 723 residues: MDPKTSAGQCPVMHGANTTAAQSNTAWWPNALNLDILHQHDTKTNPLGEGYRYREAVKQLDVAALKADLTALMTRSQPWWPADWGHYGGLMIRMAWHAAGSYRVADGRGGAGTGNQRFAPLNSWPDNANLDKARRLLWPIKKKYGAKISWADLIVLAGNVAYESMGLKTYGFAFGREDIWHPEKDIYWGSEKAWLAPTGGEGSRYSGQRDLENPLAAVMMGLIYVNPEGVDGQPDPLKTAQDVRVTFARMAMDDEETVALTAGGHTVGKSHGNGSAANLGPAPEGADVHEQGLGWNNHSSRGIGRDTVTSGIEGAWTTHPTQWDNGYFKLLLGYDWELKKSPAGAWQWEPVGIKEDDKPVDVEDPSIRLNPIMTDADMAMKMDPAYRRISERFAADQAYFSEVFARAWFKLTHRDLGPKSRYIGPEIPAEDLLWQDPVPVGPTAYDVGAVKSRIATSGLSVGELVATAWDSARTWRGSDYRGGANGARIRLAPQKDWAGNEPERLARVLAVLEPIAAAAGASVADVIVLAGNVGVELAAKAAGFDVTVPFAPGRGDATQAQTDVESFEVLEPVADGFRNWQQRSFAVQPEEMLLDRAQLMGLSAPEMTVLVGGLRVLGANHGGSKHGVFTDRVGALTNDFFVTLTDMAHAWVPTGRNSYEIRERASGVVKYTATRADLVFGSNSVLRAYAEVYAQDDSREKFVRDFVAAWVKVMNADRYELQG.

The tryptophyl-tyrosyl-methioninium (Trp-Tyr) (with M-250) cross-link spans 96-224 (WHAAGSYRVA…LAAVMMGLIY (129 aa)). The Proton acceptor role is filled by His-97. Residues 224-250 (YVNPEGVDGQPDPLKTAQDVRVTFARM) constitute a cross-link (tryptophyl-tyrosyl-methioninium (Tyr-Met) (with W-96)). Residue His-265 coordinates heme b.

Belongs to the peroxidase family. Peroxidase/catalase subfamily. In terms of assembly, homodimer or homotetramer. It depends on heme b as a cofactor. In terms of processing, formation of the three residue Trp-Tyr-Met cross-link is important for the catalase, but not the peroxidase activity of the enzyme.

The catalysed reaction is H2O2 + AH2 = A + 2 H2O. It carries out the reaction 2 H2O2 = O2 + 2 H2O. Bifunctional enzyme with both catalase and broad-spectrum peroxidase activity. The chain is Catalase-peroxidase from Leptothrix cholodnii (strain ATCC 51168 / LMG 8142 / SP-6) (Leptothrix discophora (strain SP-6)).